Here is a 394-residue protein sequence, read N- to C-terminus: Gap junction gamma-1 protein (394 aa).

At 1 to 22 the chain is on the cytoplasmic side; it reads MSWSFLTRLLEEIHNHSTFVGK. A helical membrane pass occupies residues 23-45; that stretch reads IWLSVLIVFRIVLTAVGGESIYY. At 46–75 the chain is on the extracellular side; that stretch reads DEQSKFVCNTEQPGCENVCYDAFAPLSHVR. A helical transmembrane segment spans residues 76–95; it reads FWVFQIILVATPSVMYLGYA. The Cytoplasmic segment spans residues 96-176; that stretch reads IHKIARMVEH…RRIREDGLMR (81 aa). A helical transmembrane segment spans residues 177-199; sequence IYVLQLLVRATFEVGFLIGQYLL. The Extracellular portion of the chain corresponds to 200–229; sequence YGFEVSPVFVCSRKPCPHKIDCFISRPTEK. The helical transmembrane segment at 230–252 threads the bilayer; that stretch reads TIFLLIMYGVSCMCLLLNVWEML. Over 253-394 the chain is Cytoplasmic; sequence HLGFGTIRDT…SGDGKNSVWI (142 aa). The segment at 354–394 is disordered; that stretch reads IQAYNNQNNPGSSSREKKSKAGSNKSSASSKSGDGKNSVWI. The span at 356-366 shows a compositional bias: polar residues; the sequence is AYNNQNNPGSS. Residues 374–394 show a composition bias toward low complexity; the sequence is AGSNKSSASSKSGDGKNSVWI.

It belongs to the connexin family. Gamma-type subfamily. As to quaternary structure, a connexon is composed of a hexamer of connexins. In terms of tissue distribution, mostly in heart and stomach.

It is found in the cell membrane. The protein localises to the cell junction. Its subcellular location is the gap junction. Its function is as follows. One gap junction consists of a cluster of closely packed pairs of transmembrane channels, the connexons, through which materials of low MW diffuse from one cell to a neighboring cell. The sequence is that of Gap junction gamma-1 protein (GJC1) from Gallus gallus (Chicken).